We begin with the raw amino-acid sequence, 108 residues long: Complement inhibitor CirpT2 (108 aa).

Residues 1–19 (MRTLVASLCVFAVFSAVCC) form the signal peptide. 4 disulfides stabilise this stretch: C40–C64, C59–C98, C76–C99, and C85–C104.

Belongs to the CirpT family. Expressed in salivary glands.

Its subcellular location is the secreted. In terms of biological role, complement inhibitor. Prevents complement-mediated activation of C5 by sterically preventing direct binding of C5 to its convertase (binding with domains MG4 and MG5). Binds C5 at a different binding site than the other tick complement inhibitors OmCI and RaCI3, and the drug eculizumab. Inhibits the complement in human, rat and guinea pig, and also shows a reduced inhibition in rabbit and pig. The sequence is that of Complement inhibitor CirpT2 from Dermacentor andersoni (Rocky mountain wood tick).